Reading from the N-terminus, the 202-residue chain is MDIEKIYKEHGAFLEGHFLLSSGNHSQFYLQSAKILEFPWIAGELANELFNVIKNAGIEFDSVCSPALGGILAGYELAKSAHKRFIFTERVDKKMTLRRGFSVSKGEKFIVCEDIITTGGSALESAKIIESLGGEVVAFAALANRGFCAVQNLGNERKESCKLPFNKPLFTLGNFEFDIYEPENCPLCKTGSVAIKPGSRGN.

Residues Lys-93 and 113–121 each bind 5-phospho-alpha-D-ribose 1-diphosphate; that span reads EDIITTGGS. Residues Thr-117 and Arg-145 each contribute to the orotate site.

The protein belongs to the purine/pyrimidine phosphoribosyltransferase family. PyrE subfamily. In terms of assembly, homodimer. Mg(2+) serves as cofactor.

It catalyses the reaction orotidine 5'-phosphate + diphosphate = orotate + 5-phospho-alpha-D-ribose 1-diphosphate. It functions in the pathway pyrimidine metabolism; UMP biosynthesis via de novo pathway; UMP from orotate: step 1/2. Catalyzes the transfer of a ribosyl phosphate group from 5-phosphoribose 1-diphosphate to orotate, leading to the formation of orotidine monophosphate (OMP). The polypeptide is Orotate phosphoribosyltransferase (Campylobacter hominis (strain ATCC BAA-381 / DSM 21671 / CCUG 45161 / LMG 19568 / NCTC 13146 / CH001A)).